Here is a 616-residue protein sequence, read N- to C-terminus: TAF6-like RNA polymerase II p300/CBP-associated factor-associated factor 65 kDa subunit 6L (616 aa).

Disordered regions lie at residues 399–432 (SLLLQESPPGGSSETGFGSGLPPPSGVAGPEDPS) and 455–539 (FGTG…GTRD). 2 positions are modified to phosphoserine: S494 and S500. An asymmetric dimethylarginine mark is found at R549, R555, and R587.

This sequence belongs to the TAF6 family. As to quaternary structure, the PCAF complex is composed of a number of TBP-associated factors (TAFS), such as TAF5, TAF5L, TAF6, TAF6L, TAF9, TAF10 and TAF12, PCAF, and also PCAF-associated factors (PAFs), such as TADA2L/ADA2, TADA3L/ADA3 and SPT3. Component of the STAGA transcription coactivator-HAT complex, at least composed of SUPT3H, GCN5L2, TAF5L, TAF6L, SUPT7L, TADA3L, TAD1L, TAF10, TAF12, TRRAP and TAF9.

It is found in the nucleus. Its function is as follows. Functions as a component of the PCAF complex. The PCAF complex is capable of efficiently acetylating histones in a nucleosomal context. The PCAF complex could be considered as the human version of the yeast SAGA complex. With TAF5L, acts as an epigenetic regulator essential for somatic reprogramming. Regulates target genes through H3K9ac deposition and MYC recruitment which trigger MYC regulatory network to orchestrate gene expression programs to control embryonic stem cell state. Functions with MYC to activate target gene expression through RNA polymerase II pause release. This chain is TAF6-like RNA polymerase II p300/CBP-associated factor-associated factor 65 kDa subunit 6L, found in Mus musculus (Mouse).